Consider the following 183-residue polypeptide: I-kappa-B like protein N2 (183 aa).

ANK repeat units lie at residues 62 to 95 (DGNT…DLNL) and 99 to 129 (CHKP…NLEA). A disordered region spans residues 163 to 183 (PRQDGSSEDEVSDSEEKSDSE).

It belongs to the polydnaviridae I-Kappa-B like protein family.

Suppresses the host immune response through NF-kappa-B inactivation. Possesses ankyrin repeat domains required for NF-kappa-B binding but lacks the regulatory regions required for dissociation from NF-kappa-B and degradation. Therefore, prevents host NF-kappa-B release and subsequent activation. The chain is I-kappa-B like protein N2 (N5) from Microplitis demolitor (Parasitoid wasp).